A 129-amino-acid chain; its full sequence is MSKVQEILEAVKGLTVLELSELVKAFEEEFGVSAAAPVAVAAAPGAAAAPAAPAAAEEEQTEFDVILTAVGDKKVNVIKVVREITGLGLKEAKDLVDGAPKPVKEKVSKEEAAAIKAKLTEAGATVEVK.

It belongs to the bacterial ribosomal protein bL12 family. Homodimer. Part of the ribosomal stalk of the 50S ribosomal subunit. Forms a multimeric L10(L12)X complex, where L10 forms an elongated spine to which 2 to 4 L12 dimers bind in a sequential fashion. Binds GTP-bound translation factors.

In terms of biological role, forms part of the ribosomal stalk which helps the ribosome interact with GTP-bound translation factors. Is thus essential for accurate translation. This is Large ribosomal subunit protein bL12 from Pelotomaculum thermopropionicum (strain DSM 13744 / JCM 10971 / SI).